Reading from the N-terminus, the 364-residue chain is MDAKIPPLTPFKKPSGTSLLILLILLLGLLCLGFAQILDLSSISLSLLFPLAVSAICSAILGYVVVPVLRRLKAGQVIQEDGPQTHLKKAGTPTMGGIFFVPVAVIIALIWSKLDPAVLAVSIVTLAYMGIGWIDDWQILRQKSNKGLTPRMKLILQIAIAVGFCIWTFLTQSADLTNIALPGQIILPLGLFFWIIAGFVLVAESNATNLTDGVDGLAGGTGSLAFLGLAALMASNNPGLMIFCACMSGGCLGFIVHNRNPATVFMGDTGSLALGGSLGAIGILSGHVWGLFLVSGIFFVESLSVIAQVSYYKATKGPDGKGKRLLKMAPLHHHLELSGWAETQIVGLFYLINAGLAVLAVISS.

A run of 10 helical transmembrane segments spans residues 18–38, 48–68, 91–111, 114–134, 154–174, 183–203, 214–234, 237–257, 280–300, and 343–363; these read SLLI…AQIL, LFPL…VVPV, GTPT…ALIW, LDPA…IGWI, LILQ…TQSA, GQII…VLVA, VDGL…ALMA, NPGL…FIVH, AIGI…IFFV, and TQIV…AVIS.

The protein belongs to the glycosyltransferase 4 family. MraY subfamily. Mg(2+) serves as cofactor.

The protein resides in the cell inner membrane. The enzyme catalyses UDP-N-acetyl-alpha-D-muramoyl-L-alanyl-gamma-D-glutamyl-meso-2,6-diaminopimeloyl-D-alanyl-D-alanine + di-trans,octa-cis-undecaprenyl phosphate = di-trans,octa-cis-undecaprenyl diphospho-N-acetyl-alpha-D-muramoyl-L-alanyl-D-glutamyl-meso-2,6-diaminopimeloyl-D-alanyl-D-alanine + UMP. It functions in the pathway cell wall biogenesis; peptidoglycan biosynthesis. In terms of biological role, catalyzes the initial step of the lipid cycle reactions in the biosynthesis of the cell wall peptidoglycan: transfers peptidoglycan precursor phospho-MurNAc-pentapeptide from UDP-MurNAc-pentapeptide onto the lipid carrier undecaprenyl phosphate, yielding undecaprenyl-pyrophosphoryl-MurNAc-pentapeptide, known as lipid I. The protein is Phospho-N-acetylmuramoyl-pentapeptide-transferase of Rippkaea orientalis (strain PCC 8801 / RF-1) (Cyanothece sp. (strain PCC 8801)).